The sequence spans 24 residues: Brevinin-1Ecb (24 aa).

Cys18 and Cys24 are oxidised to a cystine.

In terms of tissue distribution, expressed by the skin glands.

It is found in the secreted. Its function is as follows. Shows antibacterial activity against representative Gram-negative and Gram-positive bacterial species, and hemolytic activity. In Pelophylax ridibundus (Marsh frog), this protein is Brevinin-1Ecb.